We begin with the raw amino-acid sequence, 118 residues long: PRGPLRPLCRPINATLAAZBZACPVCITFTTSICAGYCPSMVRVLPAALPPVPZPVCTYRZLRFASIRLPGCPPGVBPMVSFPVALSCHCGPCRLSSSBCGPGRAZPLACBRSPRPGL.

6 disulfides stabilise this stretch: Cys9/Cys57, Cys23/Cys72, Cys26/Cys110, Cys34/Cys88, Cys38/Cys90, and Cys93/Cys100. Asn13 carries an N-linked (GlcNAc...) asparagine glycan.

This sequence belongs to the glycoprotein hormones subunit beta family. Heterodimer of a common alpha chain and a unique beta chain which confers biological specificity to thyrotropin, lutropin, follitropin and gonadotropin.

It localises to the secreted. Promotes spermatogenesis and ovulation by stimulating the testes and ovaries to synthesize steroids. The protein is Lutropin subunit beta (LHB) of Balaenoptera acutorostrata (Common minke whale).